Here is a 178-residue protein sequence, read N- to C-terminus: MAEQTGAVDQCLLQASSFKSQGNKCYTEHRMRQAVSLYHKALLQLRSLDASLYSPLPGVGPTAVKLNSQQAEELKTLQADCYNNLAACLLQSQPPRYQRVYECSLQVLSLQPENVKALYRAGVSSYHLKDYTNAHHYLSQAASRAPKDGNIKRYVQLTDTALSTFREEEKQRYQGMFG.

TPR repeat units follow at residues 15–48 (ASSF…LRSL), 79–114 (ADCY…QPEN), and 115–148 (VKAL…APKD).

It belongs to the TTC9 family.

The polypeptide is Tetratricopeptide repeat protein 9C (ttc9c) (Xenopus tropicalis (Western clawed frog)).